The following is a 425-amino-acid chain: Protein disulfide isomerase-like 5-3 (425 aa).

An N-terminal signal peptide occupies residues 1-28; sequence MGKPTLPPVVVVVVLLLLVVVLPATTCG. The region spanning 29–153 is the Thioredoxin domain; that stretch reads ADAGGGGEAE…LVENLKKLVA (125 aa). Catalysis depends on nucleophile residues C75 and C78. Residues C75 and C78 are joined by a disulfide bond. The chain crosses the membrane as a helical span at residues 386 to 406; the sequence is LLGVNAVYILVFLVAVLVLLM.

It belongs to the protein disulfide isomerase family.

The protein localises to the membrane. Functionally, acts as a protein-folding catalyst that interacts with nascent polypeptides to catalyze the formation, isomerization, and reduction or oxidation of disulfide bonds. May play a role in storage protein biogenesis. This is Protein disulfide isomerase-like 5-3 (PDIL5-3) from Oryza sativa subsp. japonica (Rice).